The chain runs to 509 residues: Cytochrome P450 4A10 (509 aa).

2 helical membrane passes run 11 to 31 (FTGS…LLLL) and 121 to 141 (LLAP…WFQH). E320 is a binding site for heme. Residue S439 is modified to Phosphoserine. C456 contributes to the heme binding site.

It belongs to the cytochrome P450 family. Heme serves as cofactor. Expressed in liver (at protein level) and kidney (at protein level).

Its subcellular location is the endoplasmic reticulum membrane. It is found in the microsome membrane. It catalyses the reaction an omega-methyl-long-chain fatty acid + reduced [NADPH--hemoprotein reductase] + O2 = an omega-hydroxy-long-chain fatty acid + oxidized [NADPH--hemoprotein reductase] + H2O + H(+). The enzyme catalyses dodecanoate + reduced [NADPH--hemoprotein reductase] + O2 = 12-hydroxydodecanoate + oxidized [NADPH--hemoprotein reductase] + H2O + H(+). It carries out the reaction dodecanoate + reduced [NADPH--hemoprotein reductase] + O2 = 11-hydroxydodecanoate + oxidized [NADPH--hemoprotein reductase] + H2O + H(+). The catalysed reaction is tetradecanoate + reduced [NADPH--hemoprotein reductase] + O2 = 14-hydroxytetradecanoate + oxidized [NADPH--hemoprotein reductase] + H2O + H(+). It catalyses the reaction hexadecanoate + reduced [NADPH--hemoprotein reductase] + O2 = 16-hydroxyhexadecanoate + oxidized [NADPH--hemoprotein reductase] + H2O + H(+). The enzyme catalyses (9Z)-octadecenoate + reduced [NADPH--hemoprotein reductase] + O2 = 18-hydroxy-(9Z)-octadecenoate + oxidized [NADPH--hemoprotein reductase] + H2O + H(+). It carries out the reaction (9Z,12Z)-octadecadienoate + reduced [NADPH--hemoprotein reductase] + O2 = 18-hydroxy-(9Z,12Z)-octadecadienoate + oxidized [NADPH--hemoprotein reductase] + H2O + H(+). The catalysed reaction is (9Z,12Z)-octadecadienoate + reduced [NADPH--hemoprotein reductase] + O2 = 17-hydroxy-(9Z,12Z)-octadecadienoate + oxidized [NADPH--hemoprotein reductase] + H2O + H(+). It catalyses the reaction (5Z,8Z,11Z,14Z)-eicosatetraenoate + reduced [NADPH--hemoprotein reductase] + O2 = 20-hydroxy-(5Z,8Z,11Z,14Z)-eicosatetraenoate + oxidized [NADPH--hemoprotein reductase] + H2O + H(+). The enzyme catalyses 8,9-epoxy-(5Z,11Z,14Z)-eicosatrienoate + reduced [NADPH--hemoprotein reductase] + O2 = 20-hydroxy-8,9-epoxy-(5Z,11Z,14Z)-eicosatrienoate + oxidized [NADPH--hemoprotein reductase] + H2O + H(+). Functionally, a cytochrome P450 monooxygenase involved in the metabolism of fatty acids. Catalyzes predominantly the oxidation of the terminal carbon (omega-oxidation) of long-chain fatty acids. Acts as a major omega-hydroxylase for dodecanoic (lauric) acid in liver. In kidney, may play an important role in omega-hydroxylation of (5Z,8Z,11Z,14Z)-eicosatetraenoic acid (arachidonate) to 20-hydroxyeicosatetraenoic acid (20-HETE), a signaling molecule acting both as vasoconstrictive and natriuretic with overall effect on arterial blood pressure. Also participates in the formation of anti-inflammatory hydroxyepoxyeicosatrienoic acids (HEETs) in kidney by converting 8,9-epoxyeicosatrienoic acid (EET) to 20,8,9-HEET, an activator of PPARA. Displays substantially lower fatty acid omega-1 hydroxylase activity. Mechanistically, uses molecular oxygen inserting one oxygen atom into a substrate, and reducing the second into a water molecule, with two electrons provided by NADPH via cytochrome P450 reductase (CPR; NADPH-ferrihemoprotein reductase). This is Cytochrome P450 4A10 (Cyp4a10) from Rattus norvegicus (Rat).